The chain runs to 212 residues: Thymidylate kinase (212 aa).

11-18 (GIEGSGKT) contacts ATP.

This sequence belongs to the thymidylate kinase family.

It catalyses the reaction dTMP + ATP = dTDP + ADP. In terms of biological role, phosphorylation of dTMP to form dTDP in both de novo and salvage pathways of dTTP synthesis. In Buchnera aphidicola subsp. Baizongia pistaciae (strain Bp), this protein is Thymidylate kinase.